A 305-amino-acid chain; its full sequence is tRNA uridine(34) hydroxylase (305 aa).

The region spanning 130–228 is the Rhodanese domain; it reads DDPDTLVIDT…YLGEIPEQES (99 aa). Cys-188 acts as the Cysteine persulfide intermediate in catalysis.

The protein belongs to the TrhO family.

The catalysed reaction is uridine(34) in tRNA + AH2 + O2 = 5-hydroxyuridine(34) in tRNA + A + H2O. Functionally, catalyzes oxygen-dependent 5-hydroxyuridine (ho5U) modification at position 34 in tRNAs. This chain is tRNA uridine(34) hydroxylase, found in Synechococcus sp. (strain CC9902).